A 218-amino-acid polypeptide reads, in one-letter code: Ribonuclease T (218 aa).

Residues 22 to 196 (VVVDVETAGF…YDAMKTAELF (175 aa)) form the Exonuclease domain. 4 residues coordinate Mg(2+): Asp25, Glu27, His183, and Asp188. Catalysis depends on His183, which acts as the Proton donor/acceptor.

Belongs to the RNase T family. As to quaternary structure, homodimer. Mg(2+) is required as a cofactor.

Its function is as follows. Trims short 3' overhangs of a variety of RNA species, leaving a one or two nucleotide 3' overhang. Responsible for the end-turnover of tRNA: specifically removes the terminal AMP residue from uncharged tRNA (tRNA-C-C-A). Also appears to be involved in tRNA biosynthesis. The protein is Ribonuclease T of Hahella chejuensis (strain KCTC 2396).